We begin with the raw amino-acid sequence, 386 residues long: MIRDERVAAILAAGGSGVRAGLRKQWLELGGESVLRRAARALVACDAVDELVVVVPSGEEGRGLAEVEGLGRPARAIAGGAARADSVRNGARAAEGCGIVLVHDAARPFATPGLAARVAEAAARDGAALAALPVTDTVKRAAPRDGAPIVEATLDRRALWLAQTPQGFRRALLLEAFEAAGDRAAEATDECALVEALGAPVTLVPGEPGNFKITGPDDVARARSILEAPVAMGVGYDTHRFAEGRRLVLGGVEFEGDGLLGHSDADVCAHAIGDAILGGAGLGDLGRHFPDTDPRWKGVSSLALLREIAAKVAAAGFRVGNCDVTLAARRPKIAPRAEEMRARLAEALGVTPGQVNVKATTGEGMGFVGRGEGIAAHAVALLVRVR.

The 2-C-methyl-D-erythritol 4-phosphate cytidylyltransferase stretch occupies residues 1 to 230; that stretch reads MIRDERVAAI…RARSILEAPV (230 aa). Positions 231 to 386 are 2-C-methyl-D-erythritol 2,4-cyclodiphosphate synthase; sequence AMGVGYDTHR…HAVALLVRVR (156 aa). A divalent metal cation-binding residues include D237 and H239. 4-CDP-2-C-methyl-D-erythritol 2-phosphate is bound by residues 237–239 and 262–263; these read DTH and HS. Residue H270 coordinates a divalent metal cation. Residues 284-286, 289-293, 360-363, F367, and R370 contribute to the 4-CDP-2-C-methyl-D-erythritol 2-phosphate site; these read DLG, FPDTD, and TTGE.

The protein in the N-terminal section; belongs to the IspD/TarI cytidylyltransferase family. IspD subfamily. This sequence in the C-terminal section; belongs to the IspF family. A divalent metal cation serves as cofactor.

It catalyses the reaction 2-C-methyl-D-erythritol 4-phosphate + CTP + H(+) = 4-CDP-2-C-methyl-D-erythritol + diphosphate. The catalysed reaction is 4-CDP-2-C-methyl-D-erythritol 2-phosphate = 2-C-methyl-D-erythritol 2,4-cyclic diphosphate + CMP. Its pathway is isoprenoid biosynthesis; isopentenyl diphosphate biosynthesis via DXP pathway; isopentenyl diphosphate from 1-deoxy-D-xylulose 5-phosphate: step 2/6. The protein operates within isoprenoid biosynthesis; isopentenyl diphosphate biosynthesis via DXP pathway; isopentenyl diphosphate from 1-deoxy-D-xylulose 5-phosphate: step 4/6. In terms of biological role, bifunctional enzyme that catalyzes the formation of 4-diphosphocytidyl-2-C-methyl-D-erythritol from CTP and 2-C-methyl-D-erythritol 4-phosphate (MEP) (IspD), and catalyzes the conversion of 4-diphosphocytidyl-2-C-methyl-D-erythritol 2-phosphate (CDP-ME2P) to 2-C-methyl-D-erythritol 2,4-cyclodiphosphate (ME-CPP) with a corresponding release of cytidine 5-monophosphate (CMP) (IspF). This Anaeromyxobacter sp. (strain Fw109-5) protein is Bifunctional enzyme IspD/IspF.